Here is a 291-residue protein sequence, read N- to C-terminus: Insulin-like growth factor-binding protein 3 (291 aa).

An N-terminal signal peptide occupies residues 1–27 (MQRARPTLWAAALTLLVLLRGPPVARA). Positions 28–134 (GASSAGLGPV…AYLLPAPPAP (107 aa)) are IGF-binding. Residues 36-117 (PVVRCEPCDA…LDGRGLCVNA (82 aa)) enclose the IGFBP N-terminal domain. 6 disulfides stabilise this stretch: C40–C67, C43–C69, C51–C70, C58–C73, C81–C94, and C88–C114. Residues N116 and N136 are each glycosylated (N-linked (GlcNAc...) (complex) asparagine). 2 disordered regions span residues 130-162 (APPA…RVSD) and 189-211 (DYES…TEYG). Over residues 146 to 156 (AGSVESPSVSS) the composition is skewed to low complexity. S148 carries the post-translational modification Phosphoserine; by FAM20C. Residues 191-202 (ESQSTDTQNFSS) show a composition bias toward polar residues. S194 is modified (phosphoserine; by CK2). N199 carries an N-linked (GlcNAc...) (complex) asparagine glycan. S201 is modified (phosphoserine; by FAM20C). S202 carries the phosphoserine; by CK2 modification. The Thyroglobulin type-1 domain occupies 210–285 (YGPCRREMED…TTKGKEDVHC (76 aa)). 3 disulfides stabilise this stretch: C213–C240, C251–C262, and C264–C285.

Interacts with XLKD1. Binds IGF2 more than IGF1. Forms a ternary complex of about 140 to 150 kDa with IGF1 or IGF2 and a 85 kDa glycoprotein (ALS). Interacts with humanin; humanin competes with importin KPNB1 for binding to IGFBP3, blocking IGFBP3 nuclear import and IGFBP3-mediated apoptosis. Interacts with TMEM219. Interacts with RXRA; this interaction modulates the transcriptional activity of RXRA. Interacts with LRP1; this interaction mediates cell growth inhibition independent of IGF1. In terms of processing, phosphorylated by FAM20C in the extracellular medium. Phosphorylated by CK2; resulting in decreased nuclear localization. As to expression, expressed by most tissues. Present in plasma.

The protein resides in the secreted. It localises to the nucleus. In terms of biological role, multifunctional protein that plays a critical role in regulating the availability of IGFs such as IGF1 and IGF2 to their receptors and thereby regulates IGF-mediated cellular processes including proliferation, differentiation, and apoptosis in a cell-type specific manner. Also exhibits IGF-independent antiproliferative and apoptotic effects mediated by its receptor TMEM219/IGFBP-3R. Inhibits the positive effect of humanin on insulin sensitivity. Promotes testicular germ cell apoptosis. Acts via LRP-1/alpha2M receptor, also known as TGF-beta type V receptor, to mediate cell growth inhibition independent of IGF1. Mechanistically, induces serine-specific dephosphorylation of IRS1 or IRS2 upon ligation to its receptor, leading to the inhibitory cascade. In the nucleus, interacts with transcription factors such as retinoid X receptor-alpha/RXRA to regulate transcriptional signaling and apoptosis. This chain is Insulin-like growth factor-binding protein 3 (IGFBP3), found in Homo sapiens (Human).